The chain runs to 767 residues: Two-component response regulator-like PRR73 (767 aa).

Residues 1–64 (MGSACEAGTD…EPQQTDEQKE (64 aa)) are disordered. The 119-residue stretch at 82–200 (RVLLVENDDS…ELKNLWQHVW (119 aa)) folds into the Response regulatory domain. A compositionally biased stretch (low complexity) spans 205 to 214 (SSSGSGSESG). 5 disordered regions span residues 205–272 (SSSG…QSSW), 312–388 (RWLP…NEPT), 476–546 (ASNQ…RGKV), 646–701 (ANYS…SGSG), and 727–767 (NFGK…DEDR). Over residues 238–252 (DNEDDDDNDEDDDDL) the composition is skewed to acidic residues. Polar residues-rich tracts occupy residues 263–272 (DNGSGTQSSW), 343–361 (RNSS…VNPT), and 488–497 (CSPQDNSSEA). Over residues 518–531 (GSNGSSNNNDMGSS) the composition is skewed to low complexity. Over residues 532-543 (TKNAITKPSSNR) the composition is skewed to polar residues. The span at 689–700 (GAGGGNGSGSGS) shows a compositional bias: gly residues. Residues 712 to 754 (REAALNKFRQKRKVRNFGKKVRYQSRKRLAEQRPRIRGQFVRQ) form the CCT domain. Positions 727-738 (NFGKKVRYQSRK) are enriched in basic residues.

This sequence belongs to the ARR-like family.

It is found in the nucleus. Controls photoperiodic flowering response. Seems to be one of the component of the circadian clock. Expression of several members of the ARR-like family is controlled by circadian rhythm. The particular coordinated sequential expression of PRR73, PRR37, PRR95, PRR59 and PPR1 result to circadian waves that may be at the basis of the endogenous circadian clock. This chain is Two-component response regulator-like PRR73 (PRR73), found in Oryza sativa subsp. indica (Rice).